Here is a 474-residue protein sequence, read N- to C-terminus: MKLSMPRFDQAPVLVVGDVMLDRYWHGGTSRISPEAPVPVVKVDQIEDRPGGAANVALNIAALGAPASLVGVTGDDEAAESLTNSLKAAGVVARFQRIADQPTIVKLRVMSRHQQLLRIDFEEPFNTDPLALSAEVYSLLDGIKVLVLSDYGKGALKNHQALIQAARKRGIPVLADPKGKDFAIYRGASLITPNLSEFEAIVGHCEDEAQLVTKGAQLMQELDLGALLVTRGEHGMTLLRPDQQALHLPARAREVFDVTGAGDTVISTLAAAIAAGEELPHAVALANLAAGIVVGKLGTAAISAPELRRAIQREEGSERGVLGLEQLLLAVDDARAHKEKIVFTNGCFDILHAGHVTYLEQARAQGDRLIVAVNDDASVSRLKGPGRPINSVDRRMAVLAGLGAVDWVISFPEGTPENLLTHVKPDVLVKGGDYGIDQVVGADIVQAYGGEVRVLGLVENSSTTAIVEKIRGQG.

The ribokinase stretch occupies residues 1–318 (MKLSMPRFDQ…RAIQREEGSE (318 aa)). 194–197 (NLSE) lines the ATP pocket. D263 is a catalytic residue. Residues 343–474 (FTNGCFDILH…AIVEKIRGQG (132 aa)) are cytidylyltransferase.

In the N-terminal section; belongs to the carbohydrate kinase PfkB family. This sequence in the C-terminal section; belongs to the cytidylyltransferase family. Homodimer.

The catalysed reaction is D-glycero-beta-D-manno-heptose 7-phosphate + ATP = D-glycero-beta-D-manno-heptose 1,7-bisphosphate + ADP + H(+). The enzyme catalyses D-glycero-beta-D-manno-heptose 1-phosphate + ATP + H(+) = ADP-D-glycero-beta-D-manno-heptose + diphosphate. It functions in the pathway nucleotide-sugar biosynthesis; ADP-L-glycero-beta-D-manno-heptose biosynthesis; ADP-L-glycero-beta-D-manno-heptose from D-glycero-beta-D-manno-heptose 7-phosphate: step 1/4. It participates in nucleotide-sugar biosynthesis; ADP-L-glycero-beta-D-manno-heptose biosynthesis; ADP-L-glycero-beta-D-manno-heptose from D-glycero-beta-D-manno-heptose 7-phosphate: step 3/4. In terms of biological role, catalyzes the phosphorylation of D-glycero-D-manno-heptose 7-phosphate at the C-1 position to selectively form D-glycero-beta-D-manno-heptose-1,7-bisphosphate. Functionally, catalyzes the ADP transfer from ATP to D-glycero-beta-D-manno-heptose 1-phosphate, yielding ADP-D-glycero-beta-D-manno-heptose. In Pseudomonas syringae pv. tomato (strain ATCC BAA-871 / DC3000), this protein is Bifunctional protein HldE.